The primary structure comprises 67 residues: DNA-directed RNA polymerase subunit omega (67 aa).

This sequence belongs to the RNA polymerase subunit omega family. As to quaternary structure, the RNAP catalytic core consists of 2 alpha, 1 beta, 1 beta' and 1 omega subunit. When a sigma factor is associated with the core the holoenzyme is formed, which can initiate transcription.

It carries out the reaction RNA(n) + a ribonucleoside 5'-triphosphate = RNA(n+1) + diphosphate. Its function is as follows. Promotes RNA polymerase assembly. Latches the N- and C-terminal regions of the beta' subunit thereby facilitating its interaction with the beta and alpha subunits. The protein is DNA-directed RNA polymerase subunit omega of Ralstonia pickettii (strain 12J).